Consider the following 184-residue polypeptide: UPF0398 protein OB1025 (184 aa).

This sequence belongs to the UPF0398 family.

This Oceanobacillus iheyensis (strain DSM 14371 / CIP 107618 / JCM 11309 / KCTC 3954 / HTE831) protein is UPF0398 protein OB1025.